A 304-amino-acid chain; its full sequence is PTB domain-containing engulfment adapter protein 1 (304 aa).

A Phosphothreonine modification is found at threonine 16. Residues 21–176 form the PID domain; sequence SKHFIPYNAK…AGLQKRIQDL (156 aa). Positions 158-202 form a coiled coil; that stretch reads KDVETRKQIAGLQKRIQDLETENMELKNKVQDLENQLRITQVSAP. Phosphoserine is present on serine 223. The disordered stretch occupies residues 223–246; it reads SPISHQSSMPTRNGTQPPPVPSRS. The span at 225 to 237 shows a compositional bias: polar residues; the sequence is ISHQSSMPTRNGT.

It belongs to the ced-6 family. Homodimer. Interacts with clathrin. Interacts with GDP-bound ARF6, but not with GTP-bound ARF6. Part of a complex composed of GULP1, ACAP1 and ARF6. Interacts with ACAP1, LRP1, MEGF10 and STAB2. Widely expressed. Detected in macrophages, pancreas, kidney, skeletal muscle, heart, colon, intestine, lung, placenta and ovary.

Its subcellular location is the cytoplasm. Functionally, may function as an adapter protein. Required for efficient phagocytosis of apoptotic cells. Modulates cellular glycosphingolipid and cholesterol transport. May play a role in the internalization and endosomal trafficking of various LRP1 ligands, such as PSAP. Increases cellular levels of GTP-bound ARF6. This chain is PTB domain-containing engulfment adapter protein 1 (GULP1), found in Homo sapiens (Human).